A 403-amino-acid polypeptide reads, in one-letter code: S-adenosylmethionine synthase (403 aa).

Position 16 (His-16) interacts with ATP. Asp-18 contacts Mg(2+). Residue Glu-44 coordinates K(+). L-methionine is bound by residues Glu-57 and Gln-100. Residues 100–110 form a flexible loop region; sequence QSPDIAQGVDR. The disordered stretch occupies residues 106–126; that stretch reads QGVDRSYESRSGSASTDAHDL. ATP-binding positions include 176–178, 248–249, Asp-257, 263–264, Ala-280, and Lys-284; these read DGK, KF, and RK. Asp-257 is a binding site for L-methionine. Lys-288 contacts L-methionine.

It belongs to the AdoMet synthase family. Homotetramer; dimer of dimers. Mg(2+) serves as cofactor. K(+) is required as a cofactor.

Its subcellular location is the cytoplasm. It carries out the reaction L-methionine + ATP + H2O = S-adenosyl-L-methionine + phosphate + diphosphate. It functions in the pathway amino-acid biosynthesis; S-adenosyl-L-methionine biosynthesis; S-adenosyl-L-methionine from L-methionine: step 1/1. In terms of biological role, catalyzes the formation of S-adenosylmethionine (AdoMet) from methionine and ATP. The overall synthetic reaction is composed of two sequential steps, AdoMet formation and the subsequent tripolyphosphate hydrolysis which occurs prior to release of AdoMet from the enzyme. The protein is S-adenosylmethionine synthase of Clavibacter sepedonicus (Clavibacter michiganensis subsp. sepedonicus).